A 2682-amino-acid polypeptide reads, in one-letter code: 3-methylorcinaldehyde synthase (2682 aa).

Residues 111-272 (LIPLVVIEQL…TEITLYGAFH (162 aa)) are N-terminal acylcarrier protein transacylase domain (SAT). Residue Cys154 is the Nucleophile; for transacylase activity of the active site. The active-site Proton donor/acceptor; for transacylase activity is His272. Positions 401–826 (ESDIAVIGMA…GSNASMIVMQ (426 aa)) constitute a Ketosynthase family 3 (KS3) domain. Residues Cys573, His708, and His749 each act as for beta-ketoacyl synthase activity in the active site. Residues 947–1237 (FGGQVSTHIG…ITAMTSRALD (291 aa)) form a malonyl-CoA:ACP transacylase (MAT) domain region. The interval 1339–1468 (LTFVGFQDSS…GKIKFTNARD (130 aa)) is N-terminal hotdog fold. A PKS/mFAS DH domain is found at 1339–1651 (LTFVGFQDSS…YVKIPKLSMQ (313 aa)). Residues 1367-1649 (LLLGHMTIQT…IAYVKIPKLS (283 aa)) form a product template (PT) domain region. The Proton acceptor; for dehydratase activity role is filled by His1371. The tract at residues 1496 to 1651 (VDEVLANRSI…YVKIPKLSMQ (156 aa)) is C-terminal hotdog fold. Residue Asp1555 is the Proton donor; for dehydratase activity of the active site. The Carrier domain maps to 1723-1797 (ENITERVKAV…DLMKVVTGVV (75 aa)). Ser1757 carries the post-translational modification O-(pantetheine 4'-phosphoryl)serine. Positions 2021–2211 (EWPLNQVMYT…AGYGHVYWTE (191 aa)) are methyltransferase domain. Residues 2303 to 2548 (VTGATGGLGA…LGWTPADAIA (246 aa)) are NADPH-binding (R) domain.

The protein operates within secondary metabolite biosynthesis; terpenoid biosynthesis. Its function is as follows. Non-reducing polyketide synthase; part of the gene cluster that mediates the biosynthesis of eupenifeldin, a bistropolone meroterpenoid that acts as an antitumor agent. The first step of eupenifeldin biosynthesis is the biosynthesis of 3-methylorcinaldehyde performed by the non-reducing polyketide synthase eupA. Oxidative dearomatization of 3-methylorcinaldehyde likely catalyzed by the FAD-dependent monooxygenase eupB is followed by oxidative ring expansion by the 2-oxoglutarate-dependent dioxygenase eupC to provide the first tropolone metabolite, tropolone stipitaldehyde. In parallel, generation of sesquiterpene alpha-humulene from farnesylpyrophosphate (FPP) is catalyzed by the terpene cyclase eupE. The cytochrome P450 monooxygenase eupD then hydroxylates humulene to humulenol. The putative Diels-Alderase eupF probably catalyzes the formation of the tropolone-humulene skeleton by linking humulenol and the polyketide moiety. The short-chain dehydrogenase/reductase eupG and the flavin-dependent monooxygenase eupH are also essential for eupenifeldin biosynthesis and are likely the additional decorating enzymes of the tropolone-humulene skeleton to produce final eupenifeldin or derivatives. The protein is 3-methylorcinaldehyde synthase of Phoma sp.